A 926-amino-acid polypeptide reads, in one-letter code: Peripheral plasma membrane protein CASK (926 aa).

The region spanning 12-276 (YELCEVIGKG…VYEALNHPWL (265 aa)) is the Protein kinase domain. ATP-binding positions include 18–26 (IGKGPFSVV) and K41. S51 carries the post-translational modification Phosphoserine. D141 is a catalytic residue. 2 positions are modified to phosphoserine; by autocatalysis: S151 and S155. T182 is modified (phosphothreonine). Phosphoserine is present on residues K192 and S313. The segment at 305–315 (KGAVLAAVSSH) is calmodulin-binding. 2 L27 domains span residues 343–398 (AERA…SPQI) and 402–455 (PSDA…YSDE). Residues 482-909 (MENVTRVRLV…DETIRHLEEA (428 aa)) form a required for interaction with NRXN1 (via C-terminal tail) region. One can recognise a PDZ domain in the interval 489 to 564 (RLVQFQKNTD…MLREMRGSIT (76 aa)). Residues Y571 and S577 each carry the phosphoserine modification. Positions 574–610 (QSSSCERDSPSTSRQSPANGHSSTNNSVSDLPSTTQP) are disordered. The SH3 domain occupies 612 to 682 (GRQIYVRAQF…PSPELQEWRV (71 aa)). A Guanylate kinase-like domain is found at 739–911 (RKTLVLLGAH…TIRHLEEAVE (173 aa)).

The protein in the N-terminal section; belongs to the protein kinase superfamily. CAMK Ser/Thr protein kinase family. CaMK subfamily. This sequence belongs to the MAGUK family. In terms of assembly, CASK and LIN7 form two mutually exclusive tripartite complexes with APBA1 or CASKIN1. Component of the brain-specific heterotrimeric complex (LIN-10-LIN-2-LIN-7 complex) composed of at least APBA1, CASK, and LIN7, which associates with the motor protein KIF17 to transport vesicles along microtubules. Forms a heterotrimeric complex with DLG1 and LIN7B via their L27 domains. Identified in a complex with ACTN4, IQGAP1, MAGI2, NPHS1, SPTAN1 and SPTBN1. Part of a complex containing CASK, TBR1 and TSPYL2. Interacts with WHRN. Interacts (via the PDZ, SH3 and guanylate kinase-like domains) with NRXN1 (via C-terminus). Interacts with CASKIN1, APBA1, LIN7(A/B/C) and L27 domain of DLG1 and isoform 2 of DLG4. Interacts with FCHSD2. Interacts with KIRREL3. Interacts with TBR1. Interacts with TSPYL2. It depends on Unlike other protein kinases, does not require a divalent cation such as magnesium for catalytic activity. as a cofactor. In terms of tissue distribution, ubiquitous. Expression is significantly greater in brain relative to kidney, lung, and liver and in fetal brain and kidney relative to lung and liver.

The protein localises to the nucleus. The protein resides in the cytoplasm. It localises to the cell membrane. The catalysed reaction is L-seryl-[protein] + ATP = O-phospho-L-seryl-[protein] + ADP + H(+). It carries out the reaction L-threonyl-[protein] + ATP = O-phospho-L-threonyl-[protein] + ADP + H(+). Its activity is regulated as follows. Differs from archetypal CaMK members in that the kinase domain exhibits a constitutively active conformation and the autoinhibitory region does not engage in direct contact with the ATP-binding cleft, although it still binds Ca(2+)/CAM. Multidomain scaffolding Mg(2+)-independent protein kinase that catalyzes the phosphotransfer from ATP to proteins such as NRXN1, and plays a role in synaptic transmembrane protein anchoring and ion channel trafficking. Contributes to neural development and regulation of gene expression via interaction with the transcription factor TBR1. Binds to cell-surface proteins, including amyloid precursor protein, neurexins and syndecans. May mediate a link between the extracellular matrix and the actin cytoskeleton via its interaction with syndecan and with the actin/spectrin-binding protein 4.1. Component of the LIN-10-LIN-2-LIN-7 complex, which associates with the motor protein KIF17 to transport vesicles containing N-methyl-D-aspartate (NMDA) receptor subunit NR2B along microtubules. This Homo sapiens (Human) protein is Peripheral plasma membrane protein CASK.